A 431-amino-acid polypeptide reads, in one-letter code: MTIKTETEKPALTYSKTRGLVELITAFMKQRRMGLNDFIQKLATNSYACKHPEVQSILNLTPPQDPELMNSNPSPPPSPSQQINLGPSSNPSAKPSDFHFLKVIGKGSFGKVLLARHRTDDQFYAVKVLQKKAILKKKEEKHIMSERNVLLKNVKHPFLVGLHYSFQTADKLYFVLDYINGGELFYHLQRERCFLEPRARFYSAEIASALGYLHSLNIVYRDLKPENILLDSQGHIILTDFGLCKENIEPNGTTSTFCGTPEYLAPEVLHKQPYDRTVDWWCLGAVLYEMLYGLPPFYSRNTAEMYDNILNKPLQLKPNISNAARHLLEGLLQKDRTKRLGCKDDFTEIKNHVFFSPINWDDLNAKKMTPPFNPNVTGPNDLRHFDPEFTDEPVPSSIGCSPDCALATASIKEAAEAFVGFSYAPSMDSYL.

The tract at residues 58 to 93 (LNLTPPQDPELMNSNPSPPPSPSQQINLGPSSNPSA) is disordered. Residues 81 to 93 (QQINLGPSSNPSA) show a composition bias toward polar residues. Positions 98-355 (FHFLKVIGKG…FTEIKNHVFF (258 aa)) constitute a Protein kinase domain. Residues 104–112 (IGKGSFGKV) and Lys127 contribute to the ATP site. Asp222 serves as the catalytic Proton acceptor. The AGC-kinase C-terminal domain occupies 356 to 431 (SPINWDDLNA…SYAPSMDSYL (76 aa)).

Belongs to the protein kinase superfamily. AGC Ser/Thr protein kinase family.

It localises to the cytoplasm. The protein resides in the nucleus. Its subcellular location is the endoplasmic reticulum. The enzyme catalyses L-seryl-[protein] + ATP = O-phospho-L-seryl-[protein] + ADP + H(+). It carries out the reaction L-threonyl-[protein] + ATP = O-phospho-L-threonyl-[protein] + ADP + H(+). Its function is as follows. Protein kinase that may play an important role in cellular stress response. May be involved in the regulation of processes such as cell survival, neuronal excitability and renal sodium excretion. This chain is Serine/threonine-protein kinase Sgk1 (sgk1), found in Fundulus heteroclitus (Killifish).